Here is a 467-residue protein sequence, read N- to C-terminus: 3-isopropylmalate dehydratase large subunit (467 aa).

Residues Cys347, Cys407, and Cys410 each contribute to the [4Fe-4S] cluster site. Residues 422 to 442 (QISASSSNRNFKGRQGSSSGR) are compositionally biased toward polar residues. The segment at 422-443 (QISASSSNRNFKGRQGSSSGRT) is disordered.

It belongs to the aconitase/IPM isomerase family. LeuC type 1 subfamily. In terms of assembly, heterodimer of LeuC and LeuD. Requires [4Fe-4S] cluster as cofactor.

It carries out the reaction (2R,3S)-3-isopropylmalate = (2S)-2-isopropylmalate. It participates in amino-acid biosynthesis; L-leucine biosynthesis; L-leucine from 3-methyl-2-oxobutanoate: step 2/4. Functionally, catalyzes the isomerization between 2-isopropylmalate and 3-isopropylmalate, via the formation of 2-isopropylmaleate. This chain is 3-isopropylmalate dehydratase large subunit, found in Nostoc punctiforme (strain ATCC 29133 / PCC 73102).